The following is a 128-amino-acid chain: Fluoride-specific ion channel FluC (128 aa).

Transmembrane regions (helical) follow at residues 3–23 (FSVI…RFLI), 34–54 (LFPV…GFLY), 69–89 (FITG…ETLL), and 100–120 (FLNI…AIIL). Na(+) is bound by residues G75 and T78.

This sequence belongs to the fluoride channel Fluc/FEX (TC 1.A.43) family.

The protein localises to the cell inner membrane. It carries out the reaction fluoride(in) = fluoride(out). Na(+) is not transported, but it plays an essential structural role and its presence is essential for fluoride channel function. Functionally, fluoride-specific ion channel. Important for reducing fluoride concentration in the cell, thus reducing its toxicity. The polypeptide is Fluoride-specific ion channel FluC (Nitratiruptor sp. (strain SB155-2)).